Reading from the N-terminus, the 140-residue chain is 3-hydroxyacyl-[acyl-carrier-protein] dehydratase FabZ (140 aa).

Histidine 47 is an active-site residue.

It belongs to the thioester dehydratase family. FabZ subfamily.

It is found in the cytoplasm. The catalysed reaction is a (3R)-hydroxyacyl-[ACP] = a (2E)-enoyl-[ACP] + H2O. Its function is as follows. Involved in unsaturated fatty acids biosynthesis. Catalyzes the dehydration of short chain beta-hydroxyacyl-ACPs and long chain saturated and unsaturated beta-hydroxyacyl-ACPs. The chain is 3-hydroxyacyl-[acyl-carrier-protein] dehydratase FabZ from Streptococcus suis (strain 98HAH33).